The sequence spans 118 residues: Large ribosomal subunit protein bL19 (118 aa).

Belongs to the bacterial ribosomal protein bL19 family.

Its function is as follows. This protein is located at the 30S-50S ribosomal subunit interface and may play a role in the structure and function of the aminoacyl-tRNA binding site. This is Large ribosomal subunit protein bL19 from Campylobacter jejuni subsp. doylei (strain ATCC BAA-1458 / RM4099 / 269.97).